We begin with the raw amino-acid sequence, 356 residues long: 1-acyl-sn-glycerol-3-phosphate acyltransferase LPAT1, chloroplastic (356 aa).

The transit peptide at 1–56 directs the protein to the chloroplast; the sequence is MDVASARSISSHPSYYGKPICSSQSSLIRISRDKVCCFGRISNGMTSFTTSLHAVP. A helical transmembrane segment spans residues 127–147; it reads GIFFCVVAGISATFLIVLMII. The HXXXXD motif signature appears at 202–207; the sequence is HQSFLD. The chain crosses the membrane as a helical span at residues 224-244; that stretch reads TGIFVIPIIGWAMSMMGVVPL.

This sequence belongs to the 1-acyl-sn-glycerol-3-phosphate acyltransferase family. In terms of tissue distribution, widely expressed. Expressed at higher level in leaves. Expressed at lower level in silique walls compared to leaves.

The protein localises to the plastid. The protein resides in the chloroplast membrane. The enzyme catalyses a fatty acyl-[ACP] + a 1-acyl-sn-glycero-3-phosphate = a 1,2-diacyl-sn-glycero-3-phosphate + holo-[ACP]. The catalysed reaction is a 1-acyl-sn-glycero-3-phosphate + an acyl-CoA = a 1,2-diacyl-sn-glycero-3-phosphate + CoA. Its pathway is phospholipid metabolism; CDP-diacylglycerol biosynthesis; CDP-diacylglycerol from sn-glycerol 3-phosphate: step 2/3. Its function is as follows. Plastidial enzyme of the prokaryotic glycerol-3-phosphate pathway that converts lysophosphatidic acid (LPA) into phosphatidic acid by incorporating an acyl moiety at position sn-2. Utilizes palmitoyl-ACP (16:0-ACP) to produce phosphatidic acid containing a saturated group at position sn-2, which is characteristic of lipids synthesized by the prokaryotic pathway. In vitro, can use 16:0-CoA as acyl donor. Essential for embryo development during the transition from the globular to the heart stage when chloroplasts begin to form. This is 1-acyl-sn-glycerol-3-phosphate acyltransferase LPAT1, chloroplastic from Arabidopsis thaliana (Mouse-ear cress).